The following is a 352-amino-acid chain: N-acetyl-gamma-glutamyl-phosphate reductase (352 aa).

The active site involves C155.

It belongs to the NAGSA dehydrogenase family. Type 1 subfamily.

Its subcellular location is the cytoplasm. It carries out the reaction N-acetyl-L-glutamate 5-semialdehyde + phosphate + NADP(+) = N-acetyl-L-glutamyl 5-phosphate + NADPH + H(+). It participates in amino-acid biosynthesis; L-arginine biosynthesis; N(2)-acetyl-L-ornithine from L-glutamate: step 3/4. Functionally, catalyzes the NADPH-dependent reduction of N-acetyl-5-glutamyl phosphate to yield N-acetyl-L-glutamate 5-semialdehyde. The sequence is that of N-acetyl-gamma-glutamyl-phosphate reductase from Gloeothece citriformis (strain PCC 7424) (Cyanothece sp. (strain PCC 7424)).